The following is a 381-amino-acid chain: Queuine tRNA-ribosyltransferase (381 aa).

The active-site Proton acceptor is D90. Residues 90 to 94 (DSGGF), D144, Q193, and G221 contribute to the substrate site. The tract at residues 252-258 (GVGTPEN) is RNA binding. D271 (nucleophile) is an active-site residue. An RNA binding; important for wobble base 34 recognition region spans residues 276–280 (TRNAR). The Zn(2+) site is built by C309, C311, C314, and H340.

Belongs to the queuine tRNA-ribosyltransferase family. Homodimer. Within each dimer, one monomer is responsible for RNA recognition and catalysis, while the other monomer binds to the replacement base PreQ1. Zn(2+) serves as cofactor.

The catalysed reaction is 7-aminomethyl-7-carbaguanine + guanosine(34) in tRNA = 7-aminomethyl-7-carbaguanosine(34) in tRNA + guanine. It participates in tRNA modification; tRNA-queuosine biosynthesis. In terms of biological role, catalyzes the base-exchange of a guanine (G) residue with the queuine precursor 7-aminomethyl-7-deazaguanine (PreQ1) at position 34 (anticodon wobble position) in tRNAs with GU(N) anticodons (tRNA-Asp, -Asn, -His and -Tyr). Catalysis occurs through a double-displacement mechanism. The nucleophile active site attacks the C1' of nucleotide 34 to detach the guanine base from the RNA, forming a covalent enzyme-RNA intermediate. The proton acceptor active site deprotonates the incoming PreQ1, allowing a nucleophilic attack on the C1' of the ribose to form the product. After dissociation, two additional enzymatic reactions on the tRNA convert PreQ1 to queuine (Q), resulting in the hypermodified nucleoside queuosine (7-(((4,5-cis-dihydroxy-2-cyclopenten-1-yl)amino)methyl)-7-deazaguanosine). The polypeptide is Queuine tRNA-ribosyltransferase (Helicobacter hepaticus (strain ATCC 51449 / 3B1)).